The following is a 172-amino-acid chain: 3-hydroxydecanoyl-[acyl-carrier-protein] dehydratase (172 aa).

The active site involves H71.

This sequence belongs to the thioester dehydratase family. FabA subfamily. As to quaternary structure, homodimer.

Its subcellular location is the cytoplasm. The catalysed reaction is a (3R)-hydroxyacyl-[ACP] = a (2E)-enoyl-[ACP] + H2O. It carries out the reaction (3R)-hydroxydecanoyl-[ACP] = (2E)-decenoyl-[ACP] + H2O. The enzyme catalyses (2E)-decenoyl-[ACP] = (3Z)-decenoyl-[ACP]. The protein operates within lipid metabolism; fatty acid biosynthesis. Functionally, necessary for the introduction of cis unsaturation into fatty acids. Catalyzes the dehydration of (3R)-3-hydroxydecanoyl-ACP to E-(2)-decenoyl-ACP and then its isomerization to Z-(3)-decenoyl-ACP. Can catalyze the dehydratase reaction for beta-hydroxyacyl-ACPs with saturated chain lengths up to 16:0, being most active on intermediate chain length. The chain is 3-hydroxydecanoyl-[acyl-carrier-protein] dehydratase from Proteus mirabilis (strain HI4320).